Consider the following 1179-residue polypeptide: MSSFRVGGKVVEKVDLCRKKQLVWRLDVWPFAILYTVWLTTIVPSIDFSDACIALGGLSAFHILVLLFTTWSVDFKCFVQFSKVNSIDQADACKVTPAKFSGSKEVVPLHFRSQMTDSASSGDMEEIFFDFRKQRFIYSKELGAFSKLPYPTKETFGHYLKCTGHGTEAKIATATEKWGRNVFDYPQPTFQKLMKENCMEPFFVFQVFCVGLWCLDEFWYYSVFTLFMLFMFESTMAKSRLKTLTDLRSVRVDSQTVMVYRSGKWVKLLGTDLLPGDVVSIGRPSTQTGGEDKTVPADMLLLVGSAIVNEAILTGESTPQWKVPIVGQRSDEKLSIKRNKNHVLFGGTKILQHSPDKSFSLKTPDGGCLAVVLRTGFETSQGKLMRTILFSTERVTANSWESGLFILFLVVFAVIAAGYVLVKGLEDPTRSKYKLLLGCSLIITSVIPPELPMELSIAVNTSLLALVRRGIFCTEPFRIPFAGKVDLCCFDKTGTLTSDDMEFRGVGGLSNCEEAETDMSKVPVRTLEILASCHALVFVENKLVGDPLEKAALKGIDWSYKADEKALPRRGNGNSVQIMQRYHFASHLKRMSVIVRIQEEYLAFVKGAPETIQERLVDVPAQYIETYKRYTRQGSRVLALAYKRLPDMMVSEARDMDRDAVESDLTFAGFAVFNCPIRPDSAPVLLELKNSSHDLVMITGDQALTACHVAGQVHIVSNPVLILGRSGSGNEYKWVSPDEKEIIPYSEKEIETLAETHDLCIGGDSIEMLQATSAVLRVIPFVKVFARVAPQQKELILTTFKAVGRGTLMCGDGTNDVGALKQAHVGVALLNNKLPLSPSDSSKDDKSKSKKSKLPLEPASKTITQNGEGSSKGKIPPQNRHLTAAELQRQKLKKIMDDLNNDEGDGRSAPLVKLGDASMASPFTAKHASVAPVTDIIRQGRSTLVTTLQMFKILGLNCLATAYVLSVMYLDGVKLGDVQATISGVLTAAFFLFISHARPLQTLSAERPHPSVFSVYLFLSLIGQFAVHLTFLVYSVKEAEKHMPEECIEPDASFHPNLVNTVSYMVSMMLQVATFAVNYMGHPFNQSIRENKPFFYALIAGAGFFTVIASDLFRDLNDSLKLVPLPQGLRDKLLIWASLMFIICYSWERLLRWAFPGKISSWKHKQRAVTANLEKKKKV.

Topologically, residues 1-20 are cytoplasmic; it reads MSSFRVGGKVVEKVDLCRKK. The helical transmembrane segment at 21–42 threads the bilayer; the sequence is QLVWRLDVWPFAILYTVWLTTI. Residues 43–50 are Lumenal-facing; it reads VPSIDFSD. A helical membrane pass occupies residues 51 to 71; that stretch reads ACIALGGLSAFHILVLLFTTW. Residues 72–192 are Cytoplasmic-facing; it reads SVDFKCFVQF…FDYPQPTFQK (121 aa). Residues 193–215 form a helical membrane-spanning segment; that stretch reads LMKENCMEPFFVFQVFCVGLWCL. The Lumenal portion of the chain corresponds to 216–218; the sequence is DEF. A helical membrane pass occupies residues 219–238; that stretch reads WYYSVFTLFMLFMFESTMAK. Over 239 to 402 the chain is Cytoplasmic; that stretch reads SRLKTLTDLR…ERVTANSWES (164 aa). A helical transmembrane segment spans residues 403–422; the sequence is GLFILFLVVFAVIAAGYVLV. The Lumenal portion of the chain corresponds to 423-435; that stretch reads KGLEDPTRSKYKL. A helical transmembrane segment spans residues 436-453; that stretch reads LLGCSLIITSVIPPELPM. Residues 454–947 are Cytoplasmic-facing; it reads ELSIAVNTSL…RQGRSTLVTT (494 aa). Asp-491 functions as the 4-aspartylphosphate intermediate in the catalytic mechanism. The Mg(2+) site is built by Asp-812 and Asp-816. The interval 833–880 is disordered; that stretch reads KLPLSPSDSSKDDKSKSKKSKLPLEPASKTITQNGEGSSKGKIPPQNR. The chain crosses the membrane as a helical span at residues 948–967; the sequence is LQMFKILGLNCLATAYVLSV. Over 968-979 the chain is Lumenal; the sequence is MYLDGVKLGDVQ. Residues 980-997 form a helical membrane-spanning segment; that stretch reads ATISGVLTAAFFLFISHA. At 998–1013 the chain is on the cytoplasmic side; it reads RPLQTLSAERPHPSVF. The chain crosses the membrane as a helical span at residues 1014 to 1034; the sequence is SVYLFLSLIGQFAVHLTFLVY. Over 1035-1059 the chain is Lumenal; that stretch reads SVKEAEKHMPEECIEPDASFHPNLV. Residues 1060–1079 traverse the membrane as a helical segment; the sequence is NTVSYMVSMMLQVATFAVNY. Residues 1080 to 1092 are Cytoplasmic-facing; sequence MGHPFNQSIRENK. A helical membrane pass occupies residues 1093–1110; it reads PFFYALIAGAGFFTVIAS. The Lumenal portion of the chain corresponds to 1111–1128; the sequence is DLFRDLNDSLKLVPLPQG. Residues 1129-1148 traverse the membrane as a helical segment; that stretch reads LRDKLLIWASLMFIICYSWE. The Cytoplasmic portion of the chain corresponds to 1149 to 1179; the sequence is RLLRWAFPGKISSWKHKQRAVTANLEKKKKV.

It belongs to the cation transport ATPase (P-type) (TC 3.A.3) family. Type V subfamily. In terms of tissue distribution, highly expressed in root meristem. Expressed in pavement cells of trichomes, stipules, stamens and pollen grains.

The protein localises to the endoplasmic reticulum membrane. The enzyme catalyses ATP + H2O = ADP + phosphate + H(+). Its function is as follows. Mediates manganese transport into the endoplasmic reticulum. The ATPase activity is required for cellular manganese homeostasis. Plays an important role in pollen and root development through its impact on protein secretion and transport processes. Functions together with LPR1 and LPR2 in a common pathway that adjusts root meristem activity to phosphate availability. Under phosphate limitation, restricts SHR movement in root meristem and is required for maintaining SCR expression in the root meristem stem-cell niche as well as for proximal meristem activity. Can complement the yeast spf1 mutant. The polypeptide is Probable manganese-transporting ATPase PDR2 (PDR2) (Arabidopsis thaliana (Mouse-ear cress)).